Here is a 448-residue protein sequence, read N- to C-terminus: Exodeoxyribonuclease 7 large subunit (448 aa).

It belongs to the XseA family. In terms of assembly, heterooligomer composed of large and small subunits.

It is found in the cytoplasm. The catalysed reaction is Exonucleolytic cleavage in either 5'- to 3'- or 3'- to 5'-direction to yield nucleoside 5'-phosphates.. Bidirectionally degrades single-stranded DNA into large acid-insoluble oligonucleotides, which are then degraded further into small acid-soluble oligonucleotides. The chain is Exodeoxyribonuclease 7 large subunit from Shewanella baltica (strain OS223).